Consider the following 1312-residue polypeptide: DNA repair protein RAD50.L (1312 aa).

ATP-binding residues include Arg13, Asn38, Gly39, Gly41, Lys42, Thr43, Thr44, Val67, Asp69, and Gln159. Thr43 contacts Mg(2+). Gln159 is a binding site for Mg(2+). Coiled-coil stretches lie at residues Val203–Glu342, Leu415–Arg558, and Ile587–Lys628. One can recognise a Zinc-hook domain in the interval Ser635–Pro734. Residues Cys681 and Cys684 each coordinate Zn(2+). A coiled-coil region spans residues Leu712 to Asn1070.

This sequence belongs to the SMC family. RAD50 subfamily. In terms of assembly, component of the MRN complex composed of two heterodimers RAD50 and MRE11 associated with a single NBN. It depends on Zn(2+) as a cofactor.

The protein resides in the nucleus. It is found in the chromosome. It localises to the telomere. It catalyses the reaction ATP + H2O = ADP + phosphate + H(+). In terms of biological role, component of the MRN complex, which plays a central role in double-strand break (DSB) repair, DNA recombination, maintenance of telomere integrity and meiosis. The MRN complex is involved in the repair of DNA double-strand breaks (DSBs) via homologous recombination (HR), an error-free mechanism which primarily occurs during S and G2 phases. The complex (1) mediates the end resection of damaged DNA, which generates proper single-stranded DNA, a key initial steps in HR, and is (2) required for the recruitment of other repair factors and efficient activation of ATM and ATR upon DNA damage. The MRN complex possesses single-strand endonuclease activity and double-strand-specific 3'-5' exonuclease activity, which are provided by mre11, to initiate end resection, which is required for single-strand invasion and recombination. Within the complex, rad50 is both required to bind DNA ends and hold them in close proximity and regulate the activity of MRE11. Rad50 provides an ATP-dependent control of MRE11 by positioning DNA ends into the mre11 active site: ATP-binding induces a large structural change from an open form with accessible MRE11 nuclease sites into a closed form. The MRN complex is also required for DNA damage signaling via activation of the atm and atr kinases: the nuclease activity of mre11 is not required to activate ATM and ATR. The MRN complex promotes recruitment of topbp1 to DNA damage sites. The MRN complex and rbbp8/CtIP are also required for chromosome alignment during metaphase. The sequence is that of DNA repair protein RAD50.L from Xenopus laevis (African clawed frog).